Consider the following 233-residue polypeptide: Large ribosomal subunit protein uL1 (233 aa).

The protein belongs to the universal ribosomal protein uL1 family. Part of the 50S ribosomal subunit.

Binds directly to 23S rRNA. The L1 stalk is quite mobile in the ribosome, and is involved in E site tRNA release. In terms of biological role, protein L1 is also a translational repressor protein, it controls the translation of the L11 operon by binding to its mRNA. This chain is Large ribosomal subunit protein uL1, found in Finegoldia magna (strain ATCC 29328 / DSM 20472 / WAL 2508) (Peptostreptococcus magnus).